Here is an 833-residue protein sequence, read N- to C-terminus: Putative GPI inositol-deacylase C (833 aa).

S130 is a catalytic residue. N191 and N456 each carry an N-linked (GlcNAc...) asparagine glycan. 5 consecutive transmembrane segments (helical) span residues 521–541 (ILFISLPSAILYAIFLVQFHA), 560–580 (YLLTSCLAGSGIAYLTGLSQV), 617–637 (VLAPIFTVFSTGMVVLITELV), 672–692 (TVFVAVISVLVLLFFPYQLAF), and 723–743 (TICVLMTWTCIINAPVLAVWI). N-linked (GlcNAc...) asparagine glycosylation is present at N772. The helical transmembrane segment at 787-807 (LLLAYTSLHCLFYGMMQAFMI) threads the bilayer.

The protein belongs to the GPI inositol-deacylase family.

The protein resides in the endoplasmic reticulum membrane. Its function is as follows. Involved in inositol deacylation of GPI-anchored proteins which plays important roles in the quality control and ER-associated degradation of GPI-anchored proteins. This chain is Putative GPI inositol-deacylase C (BST1C), found in Yarrowia lipolytica (strain CLIB 122 / E 150) (Yeast).